Consider the following 309-residue polypeptide: Olfactory receptor 8B4 (309 aa).

The Extracellular portion of the chain corresponds to 1–25 (MTLRNSSSVTEFILVGLSEQPELQL). Residue asparagine 5 is glycosylated (N-linked (GlcNAc...) asparagine). Residues 26 to 46 (PLFLLFLGIYVFTVVGNLGLI) form a helical membrane-spanning segment. Over 47–54 (TLIGINPS) the chain is Cytoplasmic. Residues 55–75 (LHTPMYFFLFNLSFIDLCYSC) traverse the membrane as a helical segment. Residues 76-98 (VFTPKMLNDFVSESIISYVGCMT) lie on the Extracellular side of the membrane. Cysteines 96 and 188 form a disulfide. A helical transmembrane segment spans residues 99–119 (QLFFFCFFVNSECYVLVSMAY). The Cytoplasmic portion of the chain corresponds to 120-138 (DRYVAICNPLLYMVTMSPR). A helical membrane pass occupies residues 139-159 (VCFLLMFGSYVVGFAGAMAHT). The Extracellular portion of the chain corresponds to 160–196 (GSMLRLTFCDSNVIDHYLCDVLPLLQLSCTSTHVSEL). A helical transmembrane segment spans residues 197 to 216 (VFFIVVGVITMLSSISIVIS). At 217-236 (YALILSNILCIPSAEGRSKA) the chain is on the cytoplasmic side. A helical transmembrane segment spans residues 237 to 257 (FSTWGSHIIAVALFFGSGTFT). Residues 258 to 270 (YLTTSFPGSMNHG) lie on the Extracellular side of the membrane. Residues 271–291 (RFASVFYTNVVPMLNPSIYSL) form a helical membrane-spanning segment. Topologically, residues 292–309 (RNKDDKLALGKTLKRVLF) are cytoplasmic.

This sequence belongs to the G-protein coupled receptor 1 family.

The protein resides in the cell membrane. In terms of biological role, odorant receptor. This is Olfactory receptor 8B4 (OR8B4) from Homo sapiens (Human).